A 415-amino-acid polypeptide reads, in one-letter code: Palmitoyl-acyl carrier protein thioesterase, chloroplastic (415 aa).

Composition is skewed to low complexity over residues 1 to 16 and 24 to 41; these read MVAT…LPSA and KLGN…KSTP. The N-terminal 60 residues, 1 to 60, are a transit peptide targeting the chloroplast; sequence MVATAASSAFFPLPSADTSSRPGKLGNKPSSLSPLKPKSTPNGGLQVKANASAPPKINGS. Residues 1–81 form a disordered region; sequence MVATAASSAF…QEDAHSAPPP (81 aa). Catalysis depends on residues N314, H316, and C351.

Belongs to the acyl-ACP thioesterase family.

It localises to the plastid. The protein resides in the chloroplast. The enzyme catalyses hexadecanoyl-[ACP] + H2O = hexadecanoate + holo-[ACP] + H(+). Plays an essential role in chain termination during de novo fatty acid synthesis. High thioesterase activity for palmitoyl-ACP versus other acyl-ACPs. This Cuphea hookeriana (Cigar plant) protein is Palmitoyl-acyl carrier protein thioesterase, chloroplastic (FATB1).